The following is an 880-amino-acid chain: Tyrosine-protein kinase receptor TYRO3 (880 aa).

A signal peptide spans 1 to 30 (MALRRSMGRPGLRPLLLAGLASLLLPGSAA). 2 consecutive Ig-like C2-type domains span residues 31 to 118 (AGLK…TKIS) and 129 to 210 (PFFT…AIIR). Residues 31-419 (AGLKLMGAPV…QGPPHSRTSW (389 aa)) are Extracellular-facing. Asparagine 53, asparagine 75, asparagine 181, asparagine 220, asparagine 230, asparagine 283, asparagine 356, and asparagine 370 each carry an N-linked (GlcNAc...) asparagine glycan. Intrachain disulfides connect cysteine 54/cysteine 107 and cysteine 150/cysteine 193. Fibronectin type-III domains lie at 217 to 310 (APFN…TKGL) and 315 to 406 (APQN…SHDH). A helical transmembrane segment spans residues 420–440 (VPVVLGVLTALITAAALALIL). At 441–880 (LRKRRKETRF…QQGLLPHSSC (440 aa)) the chain is on the cytoplasmic side. Residue serine 456 is modified to Phosphoserine. One can recognise a Protein kinase domain in the interval 508–785 (FTLGRMLGKG…LENILGHLSV (278 aa)). Residues 514–522 (LGKGEFGSV) and lysine 540 contribute to the ATP site. Aspartate 645 serves as the catalytic Proton acceptor. Phosphotyrosine; by autocatalysis occurs at positions 671, 675, 676, and 794. Disordered stretches follow at residues 804–827 (AENG…GSGM) and 842–864 (SPGG…LNEN). Serine 808 and serine 859 each carry phosphoserine. Residues 852–864 (QLEQQPESPLNEN) show a composition bias toward polar residues.

Belongs to the protein kinase superfamily. Tyr protein kinase family. AXL/UFO subfamily. In terms of assembly, monomer and homodimer. Interacts (via N-terminus) with extracellular ligands TULP1 and GAS6. Interacts with PIK3R1; this interaction increases PI3-kinase activity. Post-translationally, autophosphorylated. Abundant in the brain and lower levels in other tissues.

It localises to the cell membrane. It carries out the reaction L-tyrosyl-[protein] + ATP = O-phospho-L-tyrosyl-[protein] + ADP + H(+). In terms of biological role, receptor tyrosine kinase that transduces signals from the extracellular matrix into the cytoplasm by binding to several ligands including TULP1 or GAS6. Regulates many physiological processes including cell survival, migration and differentiation. Ligand binding at the cell surface induces dimerization and autophosphorylation of TYRO3 on its intracellular domain that provides docking sites for downstream signaling molecules. Following activation by ligand, interacts with PIK3R1 and thereby enhances PI3-kinase activity. Activates the AKT survival pathway, including nuclear translocation of NF-kappa-B and up-regulation of transcription of NF-kappa-B-regulated genes. TYRO3 signaling plays a role in various processes such as neuron protection from excitotoxic injury, platelet aggregation and cytoskeleton reorganization. Also plays an important role in inhibition of Toll-like receptors (TLRs)-mediated innate immune response by activating STAT1, which selectively induces production of suppressors of cytokine signaling SOCS1 and SOCS3. This chain is Tyrosine-protein kinase receptor TYRO3 (Tyro3), found in Rattus norvegicus (Rat).